We begin with the raw amino-acid sequence, 275 residues long: Dolichyl-diphosphooligosaccharide--protein glycosyltransferase subunit delta (275 aa).

The signal sequence occupies residues 1 to 18; it reads MKTSVFIAIFNLLVCALA. The next 3 membrane-spanning stretches (helical) occupy residues 179–199, 214–234, and 241–261; these read VFIIAAFTLLLGLFGSWVGFI, VQLLHNVSFLISVLGFELNFV, and SIFTTLFYGFILSIPCVYFGV.

This sequence belongs to the SWP1 family. Component of the oligosaccharyltransferase (OST) complex.

Its subcellular location is the endoplasmic reticulum membrane. Its pathway is protein modification; protein glycosylation. In terms of biological role, subunit of the oligosaccharyl transferase (OST) complex that catalyzes the initial transfer of a defined glycan (Glc(3)Man(9)GlcNAc(2) in eukaryotes) from the lipid carrier dolichol-pyrophosphate to an asparagine residue within an Asn-X-Ser/Thr consensus motif in nascent polypeptide chains, the first step in protein N-glycosylation. N-glycosylation occurs cotranslationally and the complex associates with the Sec61 complex at the channel-forming translocon complex that mediates protein translocation across the endoplasmic reticulum (ER). All subunits are required for a maximal enzyme activity. Plays a role in cell wall integrity and in engulfment by macrophages. This chain is Dolichyl-diphosphooligosaccharide--protein glycosyltransferase subunit delta, found in Candida albicans (strain SC5314 / ATCC MYA-2876) (Yeast).